A 165-amino-acid chain; its full sequence is MRIGLYPGTFDPITLGHIDIIRRATLLVDRLVIGVAINRDKGPLFDLEERVAMIEAECAKLTEQTGTEIVVHPFENLLIDCARDVGAQVIVRGLRAVADFEYEFQMVGMNRALDDSIETVFLMAEARHQAIASKLVKEISRLGGDVSKFVTPLVRERLAERLGQR.

Thr-9 serves as a coordination point for substrate. ATP is bound by residues 9 to 10 (TF) and His-17. Substrate-binding residues include Lys-41, Leu-78, and Arg-92. ATP is bound by residues 93–95 (GLR), Glu-103, and 128–134 (HQAIASK).

The protein belongs to the bacterial CoaD family. In terms of assembly, homohexamer. The cofactor is Mg(2+).

Its subcellular location is the cytoplasm. It catalyses the reaction (R)-4'-phosphopantetheine + ATP + H(+) = 3'-dephospho-CoA + diphosphate. The protein operates within cofactor biosynthesis; coenzyme A biosynthesis; CoA from (R)-pantothenate: step 4/5. Functionally, reversibly transfers an adenylyl group from ATP to 4'-phosphopantetheine, yielding dephospho-CoA (dPCoA) and pyrophosphate. The polypeptide is Phosphopantetheine adenylyltransferase (Ruegeria sp. (strain TM1040) (Silicibacter sp.)).